The sequence spans 264 residues: Protein Saci_1508 (264 aa).

This sequence belongs to the CinA family.

This is Protein Saci_1508 from Sulfolobus acidocaldarius (strain ATCC 33909 / DSM 639 / JCM 8929 / NBRC 15157 / NCIMB 11770).